A 171-amino-acid chain; its full sequence is Ribosome maturation factor RimM (171 aa).

One can recognise a PRC barrel domain in the interval 97–169 (DGEFYYHEII…RVDVSIMEGL (73 aa)).

Belongs to the RimM family. In terms of assembly, binds ribosomal protein uS19.

The protein localises to the cytoplasm. In terms of biological role, an accessory protein needed during the final step in the assembly of 30S ribosomal subunit, possibly for assembly of the head region. Essential for efficient processing of 16S rRNA. May be needed both before and after RbfA during the maturation of 16S rRNA. It has affinity for free ribosomal 30S subunits but not for 70S ribosomes. The polypeptide is Ribosome maturation factor RimM (Lactococcus lactis subsp. lactis (strain IL1403) (Streptococcus lactis)).